Consider the following 434-residue polypeptide: Trigger factor (434 aa).

The 86-residue stretch at 161–246 folds into the PPIase FKBP-type domain; that stretch reads EDRVTVDFNG…LKKVEERELP (86 aa).

This sequence belongs to the FKBP-type PPIase family. Tig subfamily.

Its subcellular location is the cytoplasm. The enzyme catalyses [protein]-peptidylproline (omega=180) = [protein]-peptidylproline (omega=0). Involved in protein export. Acts as a chaperone by maintaining the newly synthesized protein in an open conformation. Functions as a peptidyl-prolyl cis-trans isomerase. This Proteus mirabilis (strain HI4320) protein is Trigger factor.